A 157-amino-acid polypeptide reads, in one-letter code: UPF0225 protein PSPTO_4127 (157 aa).

It belongs to the UPF0225 family.

This chain is UPF0225 protein PSPTO_4127, found in Pseudomonas syringae pv. tomato (strain ATCC BAA-871 / DC3000).